We begin with the raw amino-acid sequence, 351 residues long: Biotin synthase (351 aa).

Residues 42–269 (NEVQVSTLLS…KSHVRLSAGR (228 aa)) form the Radical SAM core domain. [4Fe-4S] cluster is bound by residues Cys-57, Cys-61, and Cys-64. Residues Cys-101, Cys-132, Cys-192, and Arg-264 each coordinate [2Fe-2S] cluster.

This sequence belongs to the radical SAM superfamily. Biotin synthase family. In terms of assembly, homodimer. [4Fe-4S] cluster serves as cofactor. [2Fe-2S] cluster is required as a cofactor.

It carries out the reaction (4R,5S)-dethiobiotin + (sulfur carrier)-SH + 2 reduced [2Fe-2S]-[ferredoxin] + 2 S-adenosyl-L-methionine = (sulfur carrier)-H + biotin + 2 5'-deoxyadenosine + 2 L-methionine + 2 oxidized [2Fe-2S]-[ferredoxin]. Its pathway is cofactor biosynthesis; biotin biosynthesis; biotin from 7,8-diaminononanoate: step 2/2. In terms of biological role, catalyzes the conversion of dethiobiotin (DTB) to biotin by the insertion of a sulfur atom into dethiobiotin via a radical-based mechanism. The chain is Biotin synthase from Psychromonas ingrahamii (strain DSM 17664 / CCUG 51855 / 37).